The following is a 253-amino-acid chain: Electron transfer flavoprotein subunit beta, mitochondrial (253 aa).

It belongs to the ETF beta-subunit/FixA family. Heterodimer of an alpha and a beta subunit. FAD serves as cofactor. AMP is required as a cofactor.

It localises to the mitochondrion matrix. Its function is as follows. The electron transfer flavoprotein serves as a specific electron acceptor for several dehydrogenases, including five acyl-CoA dehydrogenases, glutaryl-CoA and sarcosine dehydrogenase. It transfers the electrons to the main mitochondrial respiratory chain via ETF-ubiquinone oxidoreductase (ETF dehydrogenase). The polypeptide is Electron transfer flavoprotein subunit beta, mitochondrial (ETFB) (Oryza sativa subsp. indica (Rice)).